The following is a 650-amino-acid chain: Acetyl-coenzyme A synthetase (650 aa).

CoA-binding positions include Arg191–Arg194, Thr311, and Asn335. Residues Gly387–Pro389, Asp411–Thr416, Asp500, and Arg515 contribute to the ATP site. Residue Ser523 coordinates CoA. Arg526 lines the ATP pocket. Val537, His539, and Val542 together coordinate Mg(2+). Arg584 is a CoA binding site. Lys609 carries the post-translational modification N6-acetyllysine.

It belongs to the ATP-dependent AMP-binding enzyme family. The cofactor is Mg(2+). Acetylated. Deacetylation by the SIR2-homolog deacetylase activates the enzyme.

The catalysed reaction is acetate + ATP + CoA = acetyl-CoA + AMP + diphosphate. In terms of biological role, catalyzes the conversion of acetate into acetyl-CoA (AcCoA), an essential intermediate at the junction of anabolic and catabolic pathways. AcsA undergoes a two-step reaction. In the first half reaction, AcsA combines acetate with ATP to form acetyl-adenylate (AcAMP) intermediate. In the second half reaction, it can then transfer the acetyl group from AcAMP to the sulfhydryl group of CoA, forming the product AcCoA. This Shewanella sp. (strain MR-7) protein is Acetyl-coenzyme A synthetase.